The primary structure comprises 152 residues: Ribosome maturation factor RimP (152 aa).

The protein belongs to the RimP family.

The protein resides in the cytoplasm. Required for maturation of 30S ribosomal subunits. This chain is Ribosome maturation factor RimP, found in Proteus mirabilis (strain HI4320).